The following is a 770-amino-acid chain: Metallothionein expression activator (770 aa).

Residues 77-97 (LVPSPKTGDGSSDKKNIDRTW) are disordered. Phosphoserine occurs at positions 80, 122, 247, 249, and 253. Thr-259 is modified (phosphothreonine). Positions 286–323 (PPPTLISPRMSNTSINGSPSRKYHRQRYPNKSPESNGL) are disordered. Residues 294–304 (RMSNTSINGSP) show a composition bias toward polar residues. 3 positions are modified to phosphoserine: Ser-385, Ser-392, and Ser-483. A phosphothreonine mark is found at Thr-486 and Thr-501. Ser-564 is subject to Phosphoserine. 2 C2H2-type zinc fingers span residues 603 to 627 (FECL…IQTH) and 633 to 657 (YSCD…KISH). The segment at 662–685 (YICPCGKRFNREDALMVHRSRMIC) adopts a C2H2-type 3; atypical zinc-finger fold. Residues 699–770 (LTSPKKSLLD…RTLSNETDAL (72 aa)) form a disordered region. Residues 705–745 (SLLDSPHDTSPVKETIARDKDGSVLMKMEEQLRDDMRKHGL) show a composition bias toward basic and acidic residues. Residues Ser-709 and Ser-714 each carry the phosphoserine modification. Over residues 754–770 (AHEQNSNRTLSNETDAL) the composition is skewed to polar residues.

It localises to the nucleus. Its function is as follows. Plays a role in regulating basal-level expression of CUP1. Activates EGT2 transcription in the absence of SWI5. The chain is Metallothionein expression activator (ACE2) from Saccharomyces cerevisiae (strain ATCC 204508 / S288c) (Baker's yeast).